A 384-amino-acid chain; its full sequence is Transcription factor iacI (384 aa).

The protein resides in the nucleus. In terms of biological role, transcription factor; part of the gene cluster that mediates the biosynthesis of iso-A82775C, a enylepoxycyclohexane and biosynthetic precursor of the chloropestolide anticancer natural products. In Pestalotiopsis fici (strain W106-1 / CGMCC3.15140), this protein is Transcription factor iacI.